The chain runs to 355 residues: Ferrochelatase (355 aa).

Residues histidine 214 and glutamate 295 each contribute to the Fe cation site.

It belongs to the ferrochelatase family.

It is found in the cytoplasm. The catalysed reaction is heme b + 2 H(+) = protoporphyrin IX + Fe(2+). Its pathway is porphyrin-containing compound metabolism; protoheme biosynthesis; protoheme from protoporphyrin-IX: step 1/1. In terms of biological role, catalyzes the ferrous insertion into protoporphyrin IX. The polypeptide is Ferrochelatase (Burkholderia thailandensis (strain ATCC 700388 / DSM 13276 / CCUG 48851 / CIP 106301 / E264)).